We begin with the raw amino-acid sequence, 727 residues long: Probable metal-nicotianamine transporter YSL14 (727 aa).

Composition is skewed to low complexity over residues 1-10 and 18-27; these read MAQHTAAAAG and AEAAAAAAAG. Residues 1-61 are disordered; sequence MAQHTAAAAG…RNGGADDPDA (61 aa). Over residues 45 to 54 the composition is skewed to gly residues; the sequence is AGGGGGGRNG. A run of 14 helical transmembrane segments spans residues 84 to 104, 107 to 127, 152 to 172, 194 to 214, 256 to 276, 314 to 334, 359 to 379, 432 to 452, 460 to 480, 492 to 512, 546 to 566, 604 to 624, 646 to 666, and 681 to 701; these read AFVV…KLNL, GIIP…VRLW, CVVS…LFGM, LGWM…ALVP, LGKY…YTAG, IVNV…WPLI, VFIS…KVLI, VAYG…PEIF, ILVA…GSGL, LAIF…LVGL, FISQ…VFWL, PENC…INLI, FYIG…LFVW, and VASG…ILAL.

This sequence belongs to the YSL (TC 2.A.67.2) family. As to expression, expressed in leaves and at low levels in roots.

Its subcellular location is the membrane. Functionally, may be involved in the transport of nicotianamine-chelated metals. This is Probable metal-nicotianamine transporter YSL14 (YSL14) from Oryza sativa subsp. japonica (Rice).